We begin with the raw amino-acid sequence, 146 residues long: Hemoglobin subunit beta (146 aa).

An N-acetylvaline modification is found at V1. The Globin domain occupies 2–146; the sequence is HLTADEKSAV…VATALGHKYH (145 aa). T12 is subject to Phosphothreonine. A Phosphoserine modification is found at S44. K59 bears the N6-acetyllysine mark. H63 is a binding site for heme b. Residue K82 is modified to N6-acetyllysine. H92 lines the heme b pocket. C93 is modified (S-nitrosocysteine). The residue at position 144 (K144) is an N6-acetyllysine.

This sequence belongs to the globin family. In terms of assembly, heterotetramer of two alpha chains and two beta chains. In terms of tissue distribution, red blood cells.

In terms of biological role, involved in oxygen transport from the lung to the various peripheral tissues. This chain is Hemoglobin subunit beta (HBB), found in Antrozous pallidus (Pallid bat).